Here is a 123-residue protein sequence, read N- to C-terminus: Small ribosomal subunit protein uS12c (123 aa).

This sequence belongs to the universal ribosomal protein uS12 family. As to quaternary structure, part of the 30S ribosomal subunit.

Its subcellular location is the plastid. It is found in the chloroplast. In terms of biological role, with S4 and S5 plays an important role in translational accuracy. Located at the interface of the 30S and 50S subunits. This chain is Small ribosomal subunit protein uS12c (rps12), found in Chlorella vulgaris (Green alga).